We begin with the raw amino-acid sequence, 106 residues long: 10 kDa heat shock protein, mitochondrial (106 aa).

S2 is modified (N-acetylserine). Phosphoserine is present on S31.

It belongs to the GroES chaperonin family. As to quaternary structure, homohexamer. The N-terminus is blocked.

It localises to the mitochondrion matrix. Eukaryotic CPN10 homolog which is essential for mitochondrial protein biogenesis, together with CPN60. Binds to CPN60 in the presence of Mg-ATP and suppresses the ATPase activity of the latter. This Saccharomyces cerevisiae (strain ATCC 204508 / S288c) (Baker's yeast) protein is 10 kDa heat shock protein, mitochondrial (HSP10).